The sequence spans 422 residues: Adenylosuccinate synthetase (422 aa).

GTP-binding positions include 11 to 17 and 39 to 41; these read GDEGKGK and GHT. D12 functions as the Proton acceptor in the catalytic mechanism. D12 and G39 together coordinate Mg(2+). IMP is bound by residues 12 to 15, 37 to 40, T129, R143, N219, T234, and R298; these read DEGK and NAGH. The active-site Proton donor is the H40. A substrate-binding site is contributed by 294–300; the sequence is VTTGRKR. GTP contacts are provided by residues R300, 326–328, and 411–413; these read KLD and GTG.

Belongs to the adenylosuccinate synthetase family. Homodimer. The cofactor is Mg(2+).

The protein resides in the cytoplasm. It catalyses the reaction IMP + L-aspartate + GTP = N(6)-(1,2-dicarboxyethyl)-AMP + GDP + phosphate + 2 H(+). The protein operates within purine metabolism; AMP biosynthesis via de novo pathway; AMP from IMP: step 1/2. In terms of biological role, plays an important role in the de novo pathway and in the salvage pathway of purine nucleotide biosynthesis. Catalyzes the first committed step in the biosynthesis of AMP from IMP. This chain is Adenylosuccinate synthetase, found in Talaromyces marneffei (strain ATCC 18224 / CBS 334.59 / QM 7333) (Penicillium marneffei).